Here is a 680-residue protein sequence, read N- to C-terminus: DNA-directed RNA polymerase subunit beta' (680 aa).

Cys-69, Cys-71, Cys-87, and Cys-90 together coordinate Zn(2+). The Mg(2+) site is built by Asp-489, Asp-491, and Asp-493.

The protein belongs to the RNA polymerase beta' chain family. RpoC1 subfamily. In plastids the minimal PEP RNA polymerase catalytic core is composed of four subunits: alpha, beta, beta', and beta''. When a (nuclear-encoded) sigma factor is associated with the core the holoenzyme is formed, which can initiate transcription. The cofactor is Mg(2+). Zn(2+) is required as a cofactor.

The protein resides in the plastid. The protein localises to the chloroplast. It carries out the reaction RNA(n) + a ribonucleoside 5'-triphosphate = RNA(n+1) + diphosphate. DNA-dependent RNA polymerase catalyzes the transcription of DNA into RNA using the four ribonucleoside triphosphates as substrates. This Lobularia maritima (Sweet alyssum) protein is DNA-directed RNA polymerase subunit beta'.